We begin with the raw amino-acid sequence, 159 residues long: Ribosomal RNA large subunit methyltransferase H (159 aa).

Residues leucine 76, glycine 108, and phenylalanine 127–phenylalanine 132 contribute to the S-adenosyl-L-methionine site.

This sequence belongs to the RNA methyltransferase RlmH family. In terms of assembly, homodimer.

It localises to the cytoplasm. It carries out the reaction pseudouridine(1915) in 23S rRNA + S-adenosyl-L-methionine = N(3)-methylpseudouridine(1915) in 23S rRNA + S-adenosyl-L-homocysteine + H(+). Specifically methylates the pseudouridine at position 1915 (m3Psi1915) in 23S rRNA. This is Ribosomal RNA large subunit methyltransferase H from Shouchella clausii (strain KSM-K16) (Alkalihalobacillus clausii).